Here is a 1085-residue protein sequence, read N- to C-terminus: Carbamoyl phosphate synthase large chain (1085 aa).

A carboxyphosphate synthetic domain region spans residues 1-399; that stretch reads MPKRTDISNI…ALQKALCSLE (399 aa). Positions 127, 167, 174, 206, 208, 213, 239, 240, 241, 283, and 297 each coordinate ATP. The region spanning 131–326 is the ATP-grasp 1 domain; it reads KEAMLKIGMD…IAKVATMLAV (196 aa). Mg(2+) is bound by residues Q283, E297, and N299. Q283, E297, and N299 together coordinate Mn(2+). Residues 400-551 are oligomerization domain; it reads NNWLGFESLS…YAPNPLPPIG (152 aa). The segment at 552–951 is carbamoyl phosphate synthetic domain; sequence NKQEKQEKKI…AFFKAQTACF (400 aa). Residues 678–871 form the ATP-grasp 2 domain; sequence SLFLKELDIK…LAKVATRVMV (194 aa). Residues R714, K756, L758, E763, G788, I789, H790, S791, Q830, and E842 each coordinate ATP. Q830, E842, and N844 together coordinate Mg(2+). Positions 830, 842, and 844 each coordinate Mn(2+). The MGS-like domain occupies 952–1085; that stretch reads NPIKNKGLIF…ELLALQDYLK (134 aa). Residues 952-1085 form an allosteric domain region; the sequence is NPIKNKGLIF…ELLALQDYLK (134 aa).

The protein belongs to the CarB family. Composed of two chains; the small (or glutamine) chain promotes the hydrolysis of glutamine to ammonia, which is used by the large (or ammonia) chain to synthesize carbamoyl phosphate. Tetramer of heterodimers (alpha,beta)4. The cofactor is Mg(2+). Mn(2+) serves as cofactor.

The enzyme catalyses hydrogencarbonate + L-glutamine + 2 ATP + H2O = carbamoyl phosphate + L-glutamate + 2 ADP + phosphate + 2 H(+). It catalyses the reaction hydrogencarbonate + NH4(+) + 2 ATP = carbamoyl phosphate + 2 ADP + phosphate + 2 H(+). It participates in amino-acid biosynthesis; L-arginine biosynthesis; carbamoyl phosphate from bicarbonate: step 1/1. The protein operates within pyrimidine metabolism; UMP biosynthesis via de novo pathway; (S)-dihydroorotate from bicarbonate: step 1/3. Its function is as follows. Large subunit of the glutamine-dependent carbamoyl phosphate synthetase (CPSase). CPSase catalyzes the formation of carbamoyl phosphate from the ammonia moiety of glutamine, carbonate, and phosphate donated by ATP, constituting the first step of 2 biosynthetic pathways, one leading to arginine and/or urea and the other to pyrimidine nucleotides. The large subunit (synthetase) binds the substrates ammonia (free or transferred from glutamine from the small subunit), hydrogencarbonate and ATP and carries out an ATP-coupled ligase reaction, activating hydrogencarbonate by forming carboxy phosphate which reacts with ammonia to form carbamoyl phosphate. In Helicobacter pylori (strain J99 / ATCC 700824) (Campylobacter pylori J99), this protein is Carbamoyl phosphate synthase large chain.